We begin with the raw amino-acid sequence, 165 residues long: Transcription antitermination protein NusB (165 aa).

The tract at residues 1 to 27 is disordered; sequence MISDDTDQFNPRDAKSPEAAKGKSAKR. Positions 10 to 21 are enriched in basic and acidic residues; that stretch reads NPRDAKSPEAAK.

The protein belongs to the NusB family.

In terms of biological role, involved in transcription antitermination. Required for transcription of ribosomal RNA (rRNA) genes. Binds specifically to the boxA antiterminator sequence of the ribosomal RNA (rrn) operons. This is Transcription antitermination protein NusB from Pseudomonas savastanoi pv. phaseolicola (strain 1448A / Race 6) (Pseudomonas syringae pv. phaseolicola (strain 1448A / Race 6)).